The following is a 1165-amino-acid chain: Activity-dependent neuroprotector homeobox protein 2 (1165 aa).

The C2H2-type 1 zinc-finger motif lies at tyrosine 73–histidine 96. The segment at isoleucine 106–histidine 128 adopts a C2H2-type 2; degenerate zinc-finger fold. Residue lysine 146 forms a Glycyl lysine isopeptide (Lys-Gly) (interchain with G-Cter in SUMO2) linkage. The C2H2-type 3; degenerate zinc-finger motif lies at phenylalanine 155–histidine 178. A C2H2-type 4 zinc finger spans residues tyrosine 215–histidine 240. Residues serine 303–serine 318 are compositionally biased toward low complexity. The segment at serine 303–alanine 327 is disordered. The C2H2-type 5; degenerate zinc-finger motif lies at lysine 696–histidine 718. Residues glutamine 724–histidine 746 form a C2H2-type 6; degenerate zinc finger. Residues valine 777–histidine 798 form a C2H2-type 7; degenerate zinc finger. 2 C2H2-type zinc fingers span residues leucine 800–histidine 823 and leucine 905–histidine 935. Positions proline 1005–alanine 1068 are disordered. Glycyl lysine isopeptide (Lys-Gly) (interchain with G-Cter in SUMO2) cross-links involve residues lysine 1009 and lysine 1048. Over residues lysine 1009 to glutamate 1024 the composition is skewed to basic and acidic residues. A DNA-binding region (homeobox) is located at residues aspartate 1090–isoleucine 1132.

The protein belongs to the krueppel C2H2-type zinc-finger protein family. May interact with SMARCA4/BRG1. Expressed widely, with the highest level in the brain.

The protein localises to the nucleus. May be involved in transcriptional regulation. May play a role in neuronal function; perhaps involved in protection of brain tissues from oxidative stress. May be involved in erythroid differentiation. The sequence is that of Activity-dependent neuroprotector homeobox protein 2 (Adnp2) from Mus musculus (Mouse).